Here is a 240-residue protein sequence, read N- to C-terminus: UDP-2,3-diacylglucosamine hydrolase (240 aa).

Mn(2+) is bound by residues Asp8, His10, Asp41, Asn79, and His114. Residue Asn79 to Arg80 coordinates substrate. The substrate site is built by Asp122, Ser160, Asn164, Lys167, and His195. Positions 195 and 197 each coordinate Mn(2+).

Belongs to the LpxH family. The cofactor is Mn(2+).

The protein resides in the cell inner membrane. It catalyses the reaction UDP-2-N,3-O-bis[(3R)-3-hydroxytetradecanoyl]-alpha-D-glucosamine + H2O = 2-N,3-O-bis[(3R)-3-hydroxytetradecanoyl]-alpha-D-glucosaminyl 1-phosphate + UMP + 2 H(+). It functions in the pathway glycolipid biosynthesis; lipid IV(A) biosynthesis; lipid IV(A) from (3R)-3-hydroxytetradecanoyl-[acyl-carrier-protein] and UDP-N-acetyl-alpha-D-glucosamine: step 4/6. Functionally, hydrolyzes the pyrophosphate bond of UDP-2,3-diacylglucosamine to yield 2,3-diacylglucosamine 1-phosphate (lipid X) and UMP by catalyzing the attack of water at the alpha-P atom. Involved in the biosynthesis of lipid A, a phosphorylated glycolipid that anchors the lipopolysaccharide to the outer membrane of the cell. The polypeptide is UDP-2,3-diacylglucosamine hydrolase (Salmonella newport (strain SL254)).